We begin with the raw amino-acid sequence, 321 residues long: Annexin D3 (321 aa).

Alanine 2 carries the post-translational modification N-acetylalanine. 4 Annexin repeats span residues 11–82, 83–159, 171–243, and 247–318; these read PSPA…SWTY, DPAE…TLAS, EVAT…VAIF, and TPEK…TLLG. Residues glycine 26, glycine 28, and glutamate 68 each contribute to the Ca(2+) site. The residue at position 117 (threonine 117) is a Phosphothreonine. Residues isoleucine 260 and glycine 264 each contribute to the Ca(2+) site. At tyrosine 289 the chain carries Phosphotyrosine. Aspartate 304 contacts Ca(2+).

This sequence belongs to the annexin (TC 1.A.31.1) family. In terms of tissue distribution, expressed mainly in roots and flowers. Lower in stems and leaves.

This chain is Annexin D3 (ANN3), found in Arabidopsis thaliana (Mouse-ear cress).